The chain runs to 248 residues: 3-deoxy-manno-octulosonate cytidylyltransferase (248 aa).

It belongs to the KdsB family.

It localises to the cytoplasm. It carries out the reaction 3-deoxy-alpha-D-manno-oct-2-ulosonate + CTP = CMP-3-deoxy-beta-D-manno-octulosonate + diphosphate. Its pathway is nucleotide-sugar biosynthesis; CMP-3-deoxy-D-manno-octulosonate biosynthesis; CMP-3-deoxy-D-manno-octulosonate from 3-deoxy-D-manno-octulosonate and CTP: step 1/1. The protein operates within bacterial outer membrane biogenesis; lipopolysaccharide biosynthesis. Its function is as follows. Activates KDO (a required 8-carbon sugar) for incorporation into bacterial lipopolysaccharide in Gram-negative bacteria. The polypeptide is 3-deoxy-manno-octulosonate cytidylyltransferase (Syntrophus aciditrophicus (strain SB)).